The primary structure comprises 172 residues: Resuscitation-promoting factor RpfE (172 aa).

A signal peptide spans 1 to 28; sequence MKNARTTLIAAAIAGTLVTTSPAGIANA. Residues 33 to 89 are disordered; that stretch reads LDPNAAAGPDAVGFDPNLPPAPDAAPVDTPPAPEDAGFDPNLPPPLAPDFLSPPAEE. A compositionally biased stretch (pro residues) spans 49–65; that stretch reads NLPPAPDAAPVDTPPAP.

The protein belongs to the transglycosylase family. Rpf subfamily. As to quaternary structure, interacts with RipA.

Factor that stimulates resuscitation of dormant cells. Has peptidoglycan (PG) hydrolytic activity. Active in the pM concentration range. Has little to no effect on actively-growing cells. PG fragments could either directly activate the resuscitation pathway of dormant bacteria or serve as a substrate for endogenous Rpf, resulting in low molecular weight products with resuscitation activity. Its function is as follows. Stimulates growth of stationary phase M.bovis (a slow-growing Mycobacterium), reduces the lag phase of diluted fast-growers M.smegmatis and Micrococcus luteus. Sequential gene disruption indicates RpfB and RpfE are higher than RpfD and RpfC in functional hierarchy. This chain is Resuscitation-promoting factor RpfE (rpfE), found in Mycobacterium tuberculosis (strain ATCC 25618 / H37Rv).